We begin with the raw amino-acid sequence, 307 residues long: Murein tetrapeptide carboxypeptidase (307 aa).

S115 functions as the Nucleophile in the catalytic mechanism. Catalysis depends on charge relay system residues E217 and H285.

It belongs to the peptidase S66 family. Homodimer.

The protein localises to the cytoplasm. It carries out the reaction N-acetyl-D-glucosaminyl-N-acetylmuramoyl-L-alanyl-meso-2,6-diaminoheptanedioyl-D-alanine + H2O = N-acetyl-D-glucosaminyl-N-acetylmuramoyl-L-alanyl-meso-2,6-diaminoheptanedioate + D-alanine. It functions in the pathway cell wall biogenesis; peptidoglycan recycling. In terms of biological role, releases the terminal D-alanine residue from the cytoplasmic disaccharide-tetrapeptide GlcNAc-MurNAc-L-Ala-gamma-D-Glu-meso-Dap-D-Ala, which is a murein turnover product. Probably also act on free tetrapetide. May be involved in murein recycling. The sequence is that of Murein tetrapeptide carboxypeptidase from Pseudomonas aeruginosa (strain ATCC 15692 / DSM 22644 / CIP 104116 / JCM 14847 / LMG 12228 / 1C / PRS 101 / PAO1).